We begin with the raw amino-acid sequence, 534 residues long: Cytochrome P450 78A9 (534 aa).

A helical transmembrane segment spans residues 26-46 (LALSLLVASLASLALSLFFWS). Cys474 serves as a coordination point for heme.

This sequence belongs to the cytochrome P450 family. The cofactor is heme. As to expression, expressed in the funiculus of developing ovules.

The protein localises to the membrane. Plays a role in seed and fruit development. Functions probably in association with CYP78A6 in the regulation of seed growth. This Arabidopsis thaliana (Mouse-ear cress) protein is Cytochrome P450 78A9 (CYP78A9).